The sequence spans 312 residues: Olfactory receptor 1D2 (312 aa).

Over 1 to 25 (MDGGNQSEGSEFLLLGMSESPEQQR) the chain is Extracellular. Asn5 carries an N-linked (GlcNAc...) asparagine glycan. Residues 26 to 49 (ILFWMFLSMYLVTVVGNVLIILAI) traverse the membrane as a helical segment. Over 50–57 (SSDSRLHT) the chain is Cytoplasmic. The helical transmembrane segment at 58-79 (PVYFFLANLSFTDLFFVTNTIP) threads the bilayer. The Extracellular portion of the chain corresponds to 80–100 (KMLVNLQSHNKAISYAGCLTQ). Cys97 and Cys189 are joined by a disulfide. Residues 101-120 (LYFLVSLVALDNLILAVMAY) form a helical membrane-spanning segment. Residues 121 to 139 (DRYVAICCPLHYTTAMSPK) are Cytoplasmic-facing. A helical transmembrane segment spans residues 140–158 (LCILLLSLCWVLSVLYGLI). Residues 159 to 196 (HTLLMTRVTFCGSRKIHYIFCEMYVLLRMACSNIQINH) are Extracellular-facing. A glycan (N-linked (GlcNAc...) asparagine) is linked at Asn195. Residues 197 to 219 (TVLIATGCFIFLIPFGFVIISYV) traverse the membrane as a helical segment. At 220–236 (LIIRAILRIPSVSKKYK) the chain is on the cytoplasmic side. A helical transmembrane segment spans residues 237-259 (AFSTCASHLGAVSLFYGTLCMVY). Residues 260 to 271 (LKPLHTYSVKDS) lie on the Extracellular side of the membrane. The chain crosses the membrane as a helical span at residues 272 to 291 (VATVMYAVVTPMMNPFIYSL). Residues 292 to 312 (RNKDMHGALGRLLDKHFKRLT) lie on the Cytoplasmic side of the membrane.

It belongs to the G-protein coupled receptor 1 family. Expressed in testis. Expressed in spermatozoa (at protein level). Expressed in olfactory epithelium.

Its subcellular location is the cell membrane. Functionally, odorant receptor which may be involved in sperm chemotaxis. Bourgeonal is a strong chemoattractant for sperm in vitro and is shown to be a strong agonist for OR1D2 in vitro. May also function in olfactory reception. This Homo sapiens (Human) protein is Olfactory receptor 1D2 (OR1D2).